A 436-amino-acid chain; its full sequence is FAD-dependent monooxygenase pigN (436 aa).

3 residues coordinate FAD: Glu40, Gly53, and Arg118. The active site involves Arg200. Asp316 and Ala329 together coordinate FAD.

It belongs to the paxM FAD-dependent monooxygenase family. FAD is required as a cofactor.

Its pathway is secondary metabolite biosynthesis. In terms of biological role, FAD-dependent monooxygenase; part of the gene cluster that mediates the biosynthesis of azaphilone pigments (MonAzPs), a complex mixture of compounds with a common azaphilone skeleton very widely used as food colorants. Within the pathway, pigN hydroxylates the benzaldehyde M7PKS-1 intermediate at C-4 to form the pyran ring. The first step of the pathway is performed by the nrPKS pigA that forms the hexaketide precursor from successive condensations of five malonyl-CoA units, with a simple acetyl-CoA starter unit. The role of esterase pigG is not clear, but it may play at most a supplementary role in the formation of the benzaldehyde produced by the pigA nrPKS. This very reactive benzaldehyde is intercepted by the pigC ketoreductase that to provide the first stable enzyme-free MonAzPs intermediate, 6-(4-hydroxy-2-oxopentyl)-3-methyl-2,4-dioxocyclohexane carbaldehyde, also known as M7PKS-1. The FAD-dependent monooxygenase pigN hydroxylates M7PKS-1 at C-4, which triggers the formation of the pyran ring. PigJ, pigK and pigD are involved in the acetylation of the pyran ring. PigJ and pigK form the two subunits of a dedicated fungal FAS that produces the side chain fatty acyl moiety of MonAzPs and pigD transfers the fatty acyl chain to the C-4 alcohol. PigM and pigO are involved in the elimination of the omega-1 alcohol. PigM acts as an O-acetyltransferase that synthesizes the putative O-11 acetyl intermediate whereas pigO eliminates acetic acid to yield an intermediate with a C10(11) double bond. The dehydration of the C-11 alcohol followed by the reduction of the C6(7) double bond by the NAD(P)H-dependent oxidoreductase pigE increases the electrophilicity of the C-5 ketone of the resulting acyl benzopyran. This in turn sets up the C-5 ketone for an intramolecular Knoevenagel aldol condensation with the C-20 enol of the side chain. This condensation affords the characteristic linear tricyclic carbon skeletons of the yellow pigments that serve as the common precursors for the classical yellow pigments monascin and ankaflavin, orange pigments rubopunctatin and monascorubrin, and red pigments ribropunctamine and monascorubramine. The FAD-dependent oxidoreductase pigF is especially invoved in the biosynthesis of orange and red pigments via desaturation of C6(7). This Monascus ruber (Mold) protein is FAD-dependent monooxygenase pigN.